Consider the following 199-residue polypeptide: Regulator of G-protein signaling 16 (199 aa).

S-palmitoyl cysteine attachment occurs at residues Cys-2 and Cys-12. The region spanning 64–180 (SFQSLLNSKN…LKSPAYRDLA (117 aa)) is the RGS domain. Phosphotyrosine occurs at positions 167 and 176.

In terms of assembly, interacts with GNAI1 and GNAQ. Interacts with GNAI3, GNAI3 and GNAO1. Post-translationally, palmitoylated on Cys-2 and/or Cys-12. Phosphorylated. Phosphorylation at Tyr-167 by EGFR enhances GTPase accelerating (GAP) activity toward GNAI1. As to expression, predominantly found in the retina. Some expression has been found in the liver.

It is found in the membrane. Functionally, regulates G protein-coupled receptor signaling cascades. Inhibits signal transduction by increasing the GTPase activity of G protein alpha subunits, thereby driving them into their inactive GDP-bound form. Plays an important role in the phototransduction cascade by regulating the lifetime and effective concentration of activated transducin alpha. May regulate extra and intracellular mitogenic signals. The polypeptide is Regulator of G-protein signaling 16 (Rgs16) (Rattus norvegicus (Rat)).